The following is a 496-amino-acid chain: MTTEHIEELNDQQIIRREKMAALAEQGIDPFGKRFERTANSAQLKEKYNDKDKEELNELNETAIIAGRLMTKRGKGKVGFAHIQDREGQIQIYVRKDAVGEENYEIFKKADLGDFLGIEGEIMRTDMGELSIKATHLTHLSKALRPLPEKFHGLTDVETIYRKRYLDLISNRESFERFVTRSKIISEIRRYLDGQGFLEVETPVLHNEAGGAAARPFITHHNAQNIDMVLRIATELHLKRLIVGGMERVYEIGRIFRNEGMDATHNPEFTSIEVYQAYADFQDIMDLTEGIIQHAAVSVNGDGPVNYQGTEIKINEPFKRVHMVDAIKEITGVDFWQDMSFEEAAALAQEKKVPLEKHFTEVGHVINAFFEEFVEETLIQPTFVYGHPVAVSPLAKKNPEDPRFTDRFELFIMTKEYANAFTELNDPIDQLSRFEAQAKAKELGDDEATGIDYDFVEALEYGMPPTGGLGIGIDRLVMLLTDVTTIRDVLLFPTMK.

Residues Glu409 and Glu416 each contribute to the Mg(2+) site.

This sequence belongs to the class-II aminoacyl-tRNA synthetase family. Homodimer. It depends on Mg(2+) as a cofactor.

Its subcellular location is the cytoplasm. It catalyses the reaction tRNA(Lys) + L-lysine + ATP = L-lysyl-tRNA(Lys) + AMP + diphosphate. The chain is Lysine--tRNA ligase from Streptococcus sanguinis (strain SK36).